Consider the following 379-residue polypeptide: Probable malonyl-CoA-acyl carrier protein transacylase, mitochondrial (379 aa).

The N-terminal 23 residues, 1–23 (MLAARRLLRSPRITGALSWSRWS), are a transit peptide targeting the mitochondrion. Catalysis depends on residues Ser158 and His275.

This sequence belongs to the type II malonyltransferase family.

It is found in the mitochondrion. It carries out the reaction holo-[ACP] + malonyl-CoA = malonyl-[ACP] + CoA. It functions in the pathway lipid metabolism; fatty acid biosynthesis. In terms of biological role, catalyzes the transfer of a malonyl moiety from malonyl-CoA to the free thiol group of the phosphopantetheine arm of the ACP protein. This suggests the existence of the biosynthesis of fatty acids in mitochondria. In Drosophila melanogaster (Fruit fly), this protein is Probable malonyl-CoA-acyl carrier protein transacylase, mitochondrial.